We begin with the raw amino-acid sequence, 144 residues long: Large ribosomal subunit protein uL13 (144 aa).

Belongs to the universal ribosomal protein uL13 family. In terms of assembly, part of the 50S ribosomal subunit.

Its function is as follows. This protein is one of the early assembly proteins of the 50S ribosomal subunit, although it is not seen to bind rRNA by itself. It is important during the early stages of 50S assembly. This chain is Large ribosomal subunit protein uL13, found in Nitrosomonas eutropha (strain DSM 101675 / C91 / Nm57).